The sequence spans 272 residues: uncharacterized protein (272 aa).

Catalysis depends on residues Asp71 and Glu163.

Belongs to the glycosyl hydrolase 25 family.

This is an uncharacterized protein from Escherichia coli (strain K12).